The following is a 596-amino-acid chain: Proline--tRNA ligase (596 aa).

The protein belongs to the class-II aminoacyl-tRNA synthetase family. ProS type 1 subfamily. As to quaternary structure, homodimer.

It is found in the cytoplasm. It carries out the reaction tRNA(Pro) + L-proline + ATP = L-prolyl-tRNA(Pro) + AMP + diphosphate. In terms of biological role, catalyzes the attachment of proline to tRNA(Pro) in a two-step reaction: proline is first activated by ATP to form Pro-AMP and then transferred to the acceptor end of tRNA(Pro). As ProRS can inadvertently accommodate and process non-cognate amino acids such as alanine and cysteine, to avoid such errors it has two additional distinct editing activities against alanine. One activity is designated as 'pretransfer' editing and involves the tRNA(Pro)-independent hydrolysis of activated Ala-AMP. The other activity is designated 'posttransfer' editing and involves deacylation of mischarged Ala-tRNA(Pro). The misacylated Cys-tRNA(Pro) is not edited by ProRS. The polypeptide is Proline--tRNA ligase (Prochlorococcus marinus (strain NATL2A)).